The following is a 481-amino-acid chain: MAEVRVRYAPSPTGHLHIGNARTALFNYLFARHAGGKMILRIEDTDQKRNIDGGVESQMKYLEWLGIDWDEGPGRGGEYGPYFQMERLDLYKKYTDELLEKGLAYRCYMTSEELEAEREAQIARGEAPRYSGAHRNLTQEQEEAFVAEGRTPSIRIRVPESVTYTWNDIVKEDVSFESKDFGDWVIVKKDGIPTYNFAVVVDDHLMAISHVLRGDDHISNTPKQMMIYDAFGWEYPTFGHMTLIVNEEHKKLSKRDQSIIQYIEQYKDLGYLPEALLNFVTLLGWSPVGEQEIFTKEEFIEIFDASRLSKSPAVFDQQKLAWINGQYMKHQSFEEVFEASLPFLQDAGRVSSEPTEEELVWAQNLVGLYREQMTHGAEIVELSEMFFEDELVYDEEANTVLAGETVPAVLSEFASQLRTLEEWTPEAIKGAIKATQKATGQKGKNLFMPIRVATTGQTHGPELPNTIQLLGKDRVLARLDA.

The 'HIGH' region signature appears at proline 10 to asparagine 20. Residues lysine 251–arginine 255 carry the 'KMSKS' region motif. Lysine 254 provides a ligand contact to ATP.

The protein belongs to the class-I aminoacyl-tRNA synthetase family. Glutamate--tRNA ligase type 1 subfamily. As to quaternary structure, monomer.

It localises to the cytoplasm. The enzyme catalyses tRNA(Glu) + L-glutamate + ATP = L-glutamyl-tRNA(Glu) + AMP + diphosphate. Catalyzes the attachment of glutamate to tRNA(Glu) in a two-step reaction: glutamate is first activated by ATP to form Glu-AMP and then transferred to the acceptor end of tRNA(Glu). This chain is Glutamate--tRNA ligase, found in Exiguobacterium sibiricum (strain DSM 17290 / CCUG 55495 / CIP 109462 / JCM 13490 / 255-15).